Consider the following 628-residue polypeptide: ATP-dependent zinc metalloprotease FtsH (628 aa).

The Stromal segment spans residues 1 to 7 (MKLSWKT). Residues 8–28 (LLLWSLPIFVVGFFFWQGFLG) form a helical membrane-spanning segment. At 29–118 (PTTTDVGSNI…AHPPKSTSAV (90 aa)) the chain is on the lumenal side. A helical membrane pass occupies residues 119-139 (WGLLGNLLFPLILVGGLAFLF). The Stromal portion of the chain corresponds to 140–628 (RRSNNASGGP…PEKNYYISQF (489 aa)). 213–220 (GPPGTGKT) lines the ATP pocket. H434 serves as a coordination point for Zn(2+). E435 is a catalytic residue. 2 residues coordinate Zn(2+): H438 and D512.

In the central section; belongs to the AAA ATPase family. This sequence in the C-terminal section; belongs to the peptidase M41 family. In terms of assembly, homohexamer. Requires Zn(2+) as cofactor.

It is found in the plastid. The protein resides in the chloroplast thylakoid membrane. In terms of biological role, acts as a processive, ATP-dependent zinc metallopeptidase. The chain is ATP-dependent zinc metalloprotease FtsH from Porphyra purpurea (Red seaweed).